Here is a 287-residue protein sequence, read N- to C-terminus: 4-hydroxybenzoate octaprenyltransferase (287 aa).

Helical transmembrane passes span 20–38 (IGTL…FAAG), 95–115 (IVFL…NPLV), 211–231 (IIAA…LIAE), 235–255 (IYGG…KLIF), and 266–286 (FLNN…DYLV).

It belongs to the UbiA prenyltransferase family. It depends on Mg(2+) as a cofactor.

It localises to the cell inner membrane. It catalyses the reaction all-trans-octaprenyl diphosphate + 4-hydroxybenzoate = 4-hydroxy-3-(all-trans-octaprenyl)benzoate + diphosphate. Its pathway is cofactor biosynthesis; ubiquinone biosynthesis. Functionally, catalyzes the prenylation of para-hydroxybenzoate (PHB) with an all-trans polyprenyl group. Mediates the second step in the final reaction sequence of ubiquinone-8 (UQ-8) biosynthesis, which is the condensation of the polyisoprenoid side chain with PHB, generating the first membrane-bound Q intermediate 3-octaprenyl-4-hydroxybenzoate. This is 4-hydroxybenzoate octaprenyltransferase from Shewanella piezotolerans (strain WP3 / JCM 13877).